A 24-amino-acid chain; its full sequence is L-amino-acid oxidase (24 aa).

It belongs to the flavin monoamine oxidase family. FIG1 subfamily. Homodimer; non-covalently linked. FAD serves as cofactor. N-glycosylated. In terms of tissue distribution, expressed by the venom gland.

It localises to the secreted. It carries out the reaction an L-alpha-amino acid + O2 + H2O = a 2-oxocarboxylate + H2O2 + NH4(+). In terms of biological role, catalyzes an oxidative deamination of predominantly hydrophobic and aromatic L-amino acids, thus producing hydrogen peroxide that may contribute to the diverse toxic effects of this enzyme. Exhibits diverse biological activities, such as hemorrhage, hemolysis, edema, apoptosis, and antiparasitic activities. This protein has antibacterial activity (against E.coli, S.aureus, and B.dysenteriae), cytotoxic activity, as well as an ability to induce platelet aggregation. Effects of snake L-amino oxidases on platelets are controversial, since they either induce aggregation or inhibit agonist-induced aggregation. These different effects are probably due to different experimental conditions. The polypeptide is L-amino-acid oxidase (Protobothrops mucrosquamatus (Taiwan habu)).